Consider the following 125-residue polypeptide: Small ribosomal subunit protein uS12 (125 aa).

Aspartate 89 bears the 3-methylthioaspartic acid mark. The interval 101 to 125 (SLDTAGVKDRKQSRSKYGAKRPKKA) is disordered. Residues 113–125 (SRSKYGAKRPKKA) show a composition bias toward basic residues.

This sequence belongs to the universal ribosomal protein uS12 family. In terms of assembly, part of the 30S ribosomal subunit. Contacts proteins S8 and S17. May interact with IF1 in the 30S initiation complex.

With S4 and S5 plays an important role in translational accuracy. Functionally, interacts with and stabilizes bases of the 16S rRNA that are involved in tRNA selection in the A site and with the mRNA backbone. Located at the interface of the 30S and 50S subunits, it traverses the body of the 30S subunit contacting proteins on the other side and probably holding the rRNA structure together. The combined cluster of proteins S8, S12 and S17 appears to hold together the shoulder and platform of the 30S subunit. This Thiobacillus denitrificans (strain ATCC 25259 / T1) protein is Small ribosomal subunit protein uS12.